The chain runs to 341 residues: Methionine import ATP-binding protein MetN 2 (341 aa).

Positions 2–241 (IQFKNISKHY…PQHPTTKTFI (240 aa)) constitute an ABC transporter domain. 38-45 (GYSGAGKS) lines the ATP pocket.

This sequence belongs to the ABC transporter superfamily. Methionine importer (TC 3.A.1.24) family. As to quaternary structure, the complex is composed of two ATP-binding proteins (MetN), two transmembrane proteins (MetI) and a solute-binding protein (MetQ).

The protein localises to the cell inner membrane. The catalysed reaction is L-methionine(out) + ATP + H2O = L-methionine(in) + ADP + phosphate + H(+). It catalyses the reaction D-methionine(out) + ATP + H2O = D-methionine(in) + ADP + phosphate + H(+). In terms of biological role, part of the ABC transporter complex MetNIQ involved in methionine import. Responsible for energy coupling to the transport system. In Acinetobacter baylyi (strain ATCC 33305 / BD413 / ADP1), this protein is Methionine import ATP-binding protein MetN 2.